The sequence spans 1045 residues: B3 domain-containing protein REM13 (1045 aa).

Positions 7-96 (YPQFFHTLVP…VFHVSNLGPN (90 aa)) form a DNA-binding region, TF-B3 1. The disordered stretch occupies residues 121 to 147 (NNGDVCDSEELPKEKKAKTNSEEADAV). The span at 130 to 141 (ELPKEKKAKTNS) shows a compositional bias: basic and acidic residues. 2 DNA-binding regions (TF-B3) span residues 157–253 (CFMA…FCPT) and 305–398 (FVTF…CSPE). A disordered region spans residues 423-449 (NRDKISNNDKEENMSWERKKDHLKSRD). Positions 474–570 (SNDSCLVVVS…TPVLSLCPAD (97 aa)) form a DNA-binding region, TF-B3 4. The disordered stretch occupies residues 606 to 625 (IKDDNSKEKNDKEESKSVDG). DNA-binding regions (TF-B3) lie at residues 643 to 738 (FVTL…LRTE), 815 to 910 (FVTF…LRTK), and 940 to 1035 (FVTL…LKFS).

The protein localises to the nucleus. The protein is B3 domain-containing protein REM13 (REM13) of Arabidopsis thaliana (Mouse-ear cress).